An 800-amino-acid polypeptide reads, in one-letter code: Mitochondrial intermediate peptidase (800 aa).

A mitochondrion-targeting transit peptide spans 1–23 (MAGHMLMPLRRRPWTCRACLQRL). Residues 27–41 (RRSLETAASPSSQSD) show a composition bias toward polar residues. Residues 27 to 59 (RRSLETAASPSSQSDVYDYAPTNHSTQKKSNDE) form a disordered region. Zn(2+) is bound at residue histidine 563. Residue glutamate 564 is part of the active site. Residues histidine 567 and histidine 570 each coordinate Zn(2+).

The protein belongs to the peptidase M3 family. It depends on Zn(2+) as a cofactor.

It localises to the mitochondrion matrix. The catalysed reaction is Release of an N-terminal octapeptide as second stage of processing of some proteins imported into the mitochondrion.. Cleaves proteins, imported into the mitochondrion, to their mature size. While most mitochondrial precursor proteins are processed to the mature form in one step by mitochondrial processing peptidase (MPP), the sequential cleavage by MIP of an octapeptide after initial processing by MPP is a required step for a subgroup of nuclear-encoded precursor proteins destined for the matrix or the inner membrane. This chain is Mitochondrial intermediate peptidase (oct1), found in Aspergillus oryzae (strain ATCC 42149 / RIB 40) (Yellow koji mold).